The chain runs to 406 residues: Tyrosine--tRNA ligase (406 aa).

Tyr-35 is a binding site for L-tyrosine. A 'HIGH' region motif is present at residues 40–49 (PTADSLHVGH). 2 residues coordinate L-tyrosine: Tyr-168 and Gln-172. The 'KMSKS' region motif lies at 228–232 (KMGKT). Residue Lys-231 participates in ATP binding. Residues 340-404 (STVLDIIAKT…RGKKNYNKIE (65 aa)) form the S4 RNA-binding domain.

This sequence belongs to the class-I aminoacyl-tRNA synthetase family. TyrS type 1 subfamily. As to quaternary structure, homodimer.

The protein resides in the cytoplasm. It carries out the reaction tRNA(Tyr) + L-tyrosine + ATP = L-tyrosyl-tRNA(Tyr) + AMP + diphosphate + H(+). Functionally, catalyzes the attachment of tyrosine to tRNA(Tyr) in a two-step reaction: tyrosine is first activated by ATP to form Tyr-AMP and then transferred to the acceptor end of tRNA(Tyr). This chain is Tyrosine--tRNA ligase, found in Clostridium botulinum (strain Alaska E43 / Type E3).